We begin with the raw amino-acid sequence, 292 residues long: Large ribosomal subunit protein uL18 (292 aa).

It belongs to the universal ribosomal protein uL18 family. Component of the large ribosomal subunit (LSU).

It is found in the cytoplasm. The protein localises to the nucleus. In terms of biological role, component of the ribosome, a large ribonucleoprotein complex responsible for the synthesis of proteins in the cell. The small ribosomal subunit (SSU) binds messenger RNAs (mRNAs) and translates the encoded message by selecting cognate aminoacyl-transfer RNA (tRNA) molecules. The large subunit (LSU) contains the ribosomal catalytic site termed the peptidyl transferase center (PTC), which catalyzes the formation of peptide bonds, thereby polymerizing the amino acids delivered by tRNAs into a polypeptide chain. The nascent polypeptides leave the ribosome through a tunnel in the LSU and interact with protein factors that function in enzymatic processing, targeting, and the membrane insertion of nascent chains at the exit of the ribosomal tunnel. In Dictyostelium discoideum (Social amoeba), this protein is Large ribosomal subunit protein uL18 (rpl5).